We begin with the raw amino-acid sequence, 150 residues long: D-aminoacyl-tRNA deacylase (150 aa).

A Gly-cisPro motif, important for rejection of L-amino acids motif is present at residues 138–139 (GP).

It belongs to the DTD family. In terms of assembly, homodimer.

It is found in the cytoplasm. It catalyses the reaction glycyl-tRNA(Ala) + H2O = tRNA(Ala) + glycine + H(+). The enzyme catalyses a D-aminoacyl-tRNA + H2O = a tRNA + a D-alpha-amino acid + H(+). An aminoacyl-tRNA editing enzyme that deacylates mischarged D-aminoacyl-tRNAs. Also deacylates mischarged glycyl-tRNA(Ala), protecting cells against glycine mischarging by AlaRS. Acts via tRNA-based rather than protein-based catalysis; rejects L-amino acids rather than detecting D-amino acids in the active site. By recycling D-aminoacyl-tRNA to D-amino acids and free tRNA molecules, this enzyme counteracts the toxicity associated with the formation of D-aminoacyl-tRNA entities in vivo and helps enforce protein L-homochirality. In Chlorobaculum tepidum (strain ATCC 49652 / DSM 12025 / NBRC 103806 / TLS) (Chlorobium tepidum), this protein is D-aminoacyl-tRNA deacylase.